A 203-amino-acid chain; its full sequence is NADH-quinone oxidoreductase subunit C (203 aa).

It belongs to the complex I 30 kDa subunit family. As to quaternary structure, NDH-1 is composed of 14 different subunits. Subunits NuoB, C, D, E, F, and G constitute the peripheral sector of the complex.

The protein localises to the cell inner membrane. The catalysed reaction is a quinone + NADH + 5 H(+)(in) = a quinol + NAD(+) + 4 H(+)(out). NDH-1 shuttles electrons from NADH, via FMN and iron-sulfur (Fe-S) centers, to quinones in the respiratory chain. The immediate electron acceptor for the enzyme in this species is believed to be ubiquinone. Couples the redox reaction to proton translocation (for every two electrons transferred, four hydrogen ions are translocated across the cytoplasmic membrane), and thus conserves the redox energy in a proton gradient. This Bartonella tribocorum (strain CIP 105476 / IBS 506) protein is NADH-quinone oxidoreductase subunit C.